The sequence spans 249 residues: Metallo-beta-lactamase type 2 (249 aa).

The signal sequence occupies residues 1–22; sequence MLKKIKISLILALGLTSLQAFG. Zn(2+) contacts are provided by His98, His100, Asp102, His161, and Cys180. Lys183 lines the substrate pocket. Residue His222 coordinates Zn(2+).

Belongs to the metallo-beta-lactamase superfamily. Class-B beta-lactamase family. Monomer. The cofactor is Zn(2+).

Its subcellular location is the periplasm. It carries out the reaction a beta-lactam + H2O = a substituted beta-amino acid. Functionally, confers resistance to the different beta-lactams antibiotics (penicillin, cephalosporin and carbapenem) via the hydrolysis of the beta-lactam ring. The sequence is that of Metallo-beta-lactamase type 2 (blaB2) from Elizabethkingia meningoseptica (Chryseobacterium meningosepticum).